The primary structure comprises 602 residues: uncharacterized protein (602 aa).

The Helicase ATP-binding domain occupies 51 to 210; sequence QYLGTQPRDF…PFVSYQPDAD (160 aa). The span at 430-439 shows a compositional bias: basic and acidic residues; the sequence is PHRESAHDPL. 2 disordered regions span residues 430–452 and 518–538; these read PHRESAHDPLDGDPATRTQTERG and RAQLQKGATQPATSGASASVH. The segment covering 523 to 534 has biased composition (polar residues); that stretch reads KGATQPATSGAS.

This sequence to M.leprae ML1624.

This is an uncharacterized protein from Mycobacterium tuberculosis (strain ATCC 25618 / H37Rv).